The following is a 479-amino-acid chain: uncharacterized protein (479 aa).

The next 8 helical transmembrane spans lie at 25-45 (VVFV…LFFF), 63-83 (IAMI…LAGG), 110-130 (LFGP…TVIF), 133-153 (GVFN…AGIL), 175-195 (VLSI…VLGI), 229-249 (ILLY…IVWL), 287-307 (LILN…IAFI), and 328-348 (LFAP…LLLL).

The protein in the C-terminal section; belongs to the GatC family.

It is found in the cell membrane. This is an uncharacterized protein from Mycoplasma pneumoniae (strain ATCC 29342 / M129 / Subtype 1) (Mycoplasmoides pneumoniae).